An 803-amino-acid polypeptide reads, in one-letter code: Zinc finger protein 226 (803 aa).

The 71-residue stretch at 8–78 (VTFKDVAVAF…TTATRRQGNL (71 aa)) folds into the KRAB domain. The C2H2-type 1; degenerate zinc-finger motif lies at 252–274 (YQCNECKKPFSDLSSFDLHQQLQ). A C2H2-type 2; degenerate zinc finger spans residues 280–302 (LTCVERGKGFCYSPVLPVHQKVH). C2H2-type zinc fingers lie at residues 307 to 329 (LKCD…QKVH), 335 to 357 (YKCK…CKVH), 363 to 385 (YNCE…QRLH), 391 to 413 (FKCD…QRVH), 419 to 441 (YKCE…QRVH), 447 to 469 (YKCE…QGVH), 475 to 497 (YICT…QRVH), 503 to 525 (YKCN…LVVH), 531 to 553 (YKCE…QKAH), 559 to 581 (FKCE…QLIH), 587 to 609 (YKCE…CRIH), 615 to 637 (YNCE…QRVH), 643 to 665 (FKCE…QKVH), 671 to 693 (YKCD…QRVH), 699 to 721 (YKCG…QSVH), 727 to 749 (YKCD…QRVH), and 755 to 777 (YKCE…HRIH). Residues 781–803 (KSYKSNRGGKNIRESTQEKKSIK) form a disordered region. Basic and acidic residues predominate over residues 791–803 (NIRESTQEKKSIK).

The protein belongs to the krueppel C2H2-type zinc-finger protein family.

It localises to the nucleus. Its function is as follows. May be involved in transcriptional regulation. The sequence is that of Zinc finger protein 226 (ZNF226) from Homo sapiens (Human).